The following is a 293-amino-acid chain: Ribosomal protein L11 methyltransferase (293 aa).

S-adenosyl-L-methionine-binding residues include Thr145, Gly166, Asp188, and Asn230.

Belongs to the methyltransferase superfamily. PrmA family.

It localises to the cytoplasm. The enzyme catalyses L-lysyl-[protein] + 3 S-adenosyl-L-methionine = N(6),N(6),N(6)-trimethyl-L-lysyl-[protein] + 3 S-adenosyl-L-homocysteine + 3 H(+). Functionally, methylates ribosomal protein L11. This chain is Ribosomal protein L11 methyltransferase, found in Edwardsiella ictaluri (strain 93-146).